The chain runs to 305 residues: Tyrosine recombinase XerC (305 aa).

Residues 1–84 (MNEVFESYLT…TLRGFYKYAL (84 aa)) enclose the Core-binding (CB) domain. Residues 105–299 (KLPVFMFPKQ…TAEQLQNLYK (195 aa)) enclose the Tyr recombinase domain. Catalysis depends on residues arginine 146, lysine 170, histidine 251, arginine 254, and histidine 277. Residue tyrosine 286 is the O-(3'-phospho-DNA)-tyrosine intermediate of the active site.

Belongs to the 'phage' integrase family. XerC subfamily. As to quaternary structure, forms a cyclic heterotetrameric complex composed of two molecules of XerC and two molecules of XerD.

It is found in the cytoplasm. Its function is as follows. Site-specific tyrosine recombinase, which acts by catalyzing the cutting and rejoining of the recombining DNA molecules. The XerC-XerD complex is essential to convert dimers of the bacterial chromosome into monomers to permit their segregation at cell division. It also contributes to the segregational stability of plasmids. In Treponema denticola (strain ATCC 35405 / DSM 14222 / CIP 103919 / JCM 8153 / KCTC 15104), this protein is Tyrosine recombinase XerC.